A 137-amino-acid chain; its full sequence is NADH dehydrogenase [ubiquinone] 1 beta subcomplex subunit 7 (137 aa).

Gly-2 carries N-myristoyl glycine lipidation. Residues 56–98 (RDYCAHHLIRLLKCKRDSFPNFLACKQERHDWDYCEHRDYVMR) enclose the CHCH domain. The short motif at 59 to 69 (CAHHLIRLLKC) is the Cx9C motif 1 element. Intrachain disulfides connect Cys-59/Cys-90 and Cys-69/Cys-80. Phosphoserine is present on Ser-73. A Cx9C motif 2 motif is present at residues 80-90 (CKQERHDWDYC). Positions 113–137 (KRREKKAAELAKGQGPGEVDPKVAL) are disordered.

Belongs to the complex I NDUFB7 subunit family. In terms of assembly, complex I is composed of 45 different subunits.

Its subcellular location is the mitochondrion inner membrane. The protein localises to the mitochondrion intermembrane space. Functionally, accessory subunit of the mitochondrial membrane respiratory chain NADH dehydrogenase (Complex I), that is believed not to be involved in catalysis. Complex I functions in the transfer of electrons from NADH to the respiratory chain. The immediate electron acceptor for the enzyme is believed to be ubiquinone. The sequence is that of NADH dehydrogenase [ubiquinone] 1 beta subcomplex subunit 7 (NDUFB7) from Homo sapiens (Human).